Consider the following 225-residue polypeptide: Uracil-DNA glycosylase (225 aa).

The active-site Proton acceptor is the D65.

It belongs to the uracil-DNA glycosylase (UDG) superfamily. UNG family.

The protein localises to the cytoplasm. The enzyme catalyses Hydrolyzes single-stranded DNA or mismatched double-stranded DNA and polynucleotides, releasing free uracil.. Functionally, excises uracil residues from the DNA which can arise as a result of misincorporation of dUMP residues by DNA polymerase or due to deamination of cytosine. The chain is Uracil-DNA glycosylase from Clostridium botulinum (strain Alaska E43 / Type E3).